The chain runs to 196 residues: Nitrogen regulatory protein P-II homolog (196 aa).

The N-terminal 61 residues, 1 to 61 (MAASMTKPIS…NNSRVLPVVS (61 aa)), are a transit peptide targeting the chloroplast. ATP is bound by residues 108–112 (GFGAQ) and 161–164 (GDGK). G110 provides a ligand contact to Mg(2+).

This sequence belongs to the P(II) protein family. As to quaternary structure, homodimer. Interacts with NAGK. Interaction with NAGK is dependent of MgATP and inhibited by 2-oxoglutarate, arginine, glutamate, citrate, and oxaloacetate.

The protein resides in the plastid. Its subcellular location is the chloroplast. In terms of biological role, participates in sensing carbon and organic nitrogen status and regulates some steps of primary carbon and nitrogen metabolism. Required for nitrite uptake in chloroplasts and regulates arginine biosynthesis through interaction with acetylglutamate kinase (NAGK) in chloroplasts. Regulates fatty acids synthesis in chloroplasts by interacting with the acetyl-CoA carboxylase complex and inhibiting acetyl-CoA carboxylase (ACCase) activity. The chain is Nitrogen regulatory protein P-II homolog (GLB1) from Arabidopsis thaliana (Mouse-ear cress).